The chain runs to 176 residues: Cytochrome c oxidase subunit 4 isoform 2, mitochondrial (176 aa).

The transit peptide at 1-28 (MLRLTAGRVRSLLAGRATAAFSTSSARM) directs the protein to the mitochondrion. Over 29-106 (ASHDLEVAES…TYSEMKQPSS (78 aa)) the chain is Mitochondrial matrix. Residues 107-132 (EWKTVFGGIFIFLGFTGLVVWWQALY) traverse the membrane as a helical segment. At 133–176 (VYPPRPRTFDDEWKAKQLKRMLDMRVNPIEGFSAKWDYEKGQWK) the chain is on the mitochondrial intermembrane side.

This sequence belongs to the cytochrome c oxidase IV family. As to quaternary structure, component of the cytochrome c oxidase (complex IV, CIV), a multisubunit enzyme composed of 14 subunits. The complex is composed of a catalytic core of 3 subunits MT-CO1, MT-CO2 and MT-CO3, encoded in the mitochondrial DNA, and 11 supernumerary subunits COX4I, COX5A, COX5B, COX6A, COX6B, COX6C, COX7A, COX7B, COX7C, COX8 and NDUFA4, which are encoded in the nuclear genome. The complex exists as a monomer or a dimer and forms supercomplexes (SCs) in the inner mitochondrial membrane with NADH-ubiquinone oxidoreductase (complex I, CI) and ubiquinol-cytochrome c oxidoreductase (cytochrome b-c1 complex, complex III, CIII), resulting in different assemblies (supercomplex SCI(1)III(2)IV(1) and megacomplex MCI(2)III(2)IV(2)).

The protein resides in the mitochondrion inner membrane. It functions in the pathway energy metabolism; oxidative phosphorylation. Functionally, component of the cytochrome c oxidase, the last enzyme in the mitochondrial electron transport chain which drives oxidative phosphorylation. The respiratory chain contains 3 multisubunit complexes succinate dehydrogenase (complex II, CII), ubiquinol-cytochrome c oxidoreductase (cytochrome b-c1 complex, complex III, CIII) and cytochrome c oxidase (complex IV, CIV), that cooperate to transfer electrons derived from NADH and succinate to molecular oxygen, creating an electrochemical gradient over the inner membrane that drives transmembrane transport and the ATP synthase. Cytochrome c oxidase is the component of the respiratory chain that catalyzes the reduction of oxygen to water. Electrons originating from reduced cytochrome c in the intermembrane space (IMS) are transferred via the dinuclear copper A center (CU(A)) of subunit 2 and heme A of subunit 1 to the active site in subunit 1, a binuclear center (BNC) formed by heme A3 and copper B (CU(B)). The BNC reduces molecular oxygen to 2 water molecules using 4 electrons from cytochrome c in the IMS and 4 protons from the mitochondrial matrix. The sequence is that of Cytochrome c oxidase subunit 4 isoform 2, mitochondrial from Thunnus obesus (Bigeye tuna).